The sequence spans 311 residues: Olfactory receptor 2A5 (311 aa).

At 1–24 (MTKNQTWVTEFILLGFPLSLRIQM) the chain is on the extracellular side. The N-linked (GlcNAc...) asparagine glycan is linked to asparagine 4. Residues 25 to 48 (LLSGLFSLLYVFTLLGNGAILGLI) traverse the membrane as a helical segment. The Cytoplasmic portion of the chain corresponds to 49 to 56 (WLDSRLHT). Residues 57 to 78 (PMYFFLSHLAIIDISYASNNVP) form a helical membrane-spanning segment. Over 79-100 (KMLTNLGLNKRKTISFVPCTMQ) the chain is Extracellular. The cysteines at positions 97 and 189 are disulfide-linked. Residues 101 to 120 (TFLYMAFAHTECLILVMMSY) form a helical membrane-spanning segment. Over 121-139 (DRYMAICHPLQYSVIMRWG) the chain is Cytoplasmic. Residues 140–158 (VCTVLAVTSWACGSLLALV) traverse the membrane as a helical segment. Residues 159–196 (HVVLILRLPFCGPHEINHFFCEILSVLKLACADTWLNQ) are Extracellular-facing. The helical transmembrane segment at 197–219 (VVIFAASVFILVGPLCLVLVSYS) threads the bilayer. Topologically, residues 220-236 (RILAAILRIQSGEGRRK) are cytoplasmic. The chain crosses the membrane as a helical span at residues 237 to 259 (AFSTCSSHLCMVGLFFGSAIVMY). Residues 260-272 (MAPKSRHPEEQQK) are Extracellular-facing. The helical transmembrane segment at 273-292 (VLSLFYSLFNPMLNPLIYSL) threads the bilayer. The Cytoplasmic segment spans residues 293-311 (RNAEVKGALKRVLWKQRSK).

The protein belongs to the G-protein coupled receptor 1 family.

It localises to the cell membrane. Its function is as follows. Odorant receptor. In Homo sapiens (Human), this protein is Olfactory receptor 2A5 (OR2A5).